The sequence spans 887 residues: Beta-galactosidase 9 (887 aa).

The N-terminal stretch at 1-30 is a signal peptide; sequence MAESIRTFSLQWRILSLIIALLVYFPILSG. N-linked (GlcNAc...) asparagine glycosylation occurs at N37. Catalysis depends on E194, which acts as the Proton donor. E263 acts as the Nucleophile in catalysis. N-linked (GlcNAc...) asparagine glycans are attached at residues N463, N485, N496, N527, and N785. In terms of domain architecture, SUEL-type lectin spans 791–877; sequence NSVAPEVHLH…KTLAVMSRCS (87 aa). An N-linked (GlcNAc...) asparagine glycan is attached at N881.

The protein belongs to the glycosyl hydrolase 35 family. In terms of tissue distribution, ubiquitous, with higher expression levels in siliques.

The protein resides in the secreted. The protein localises to the extracellular space. It localises to the apoplast. The catalysed reaction is Hydrolysis of terminal non-reducing beta-D-galactose residues in beta-D-galactosides.. The chain is Beta-galactosidase 9 (BGAL9) from Arabidopsis thaliana (Mouse-ear cress).